We begin with the raw amino-acid sequence, 131 residues long: Small ribosomal subunit protein eS8 (131 aa).

The interval 11–36 is disordered; sequence DLKKPSGGKKGRVRKTKKKALCGGPP. The segment covering 16–30 has biased composition (basic residues); that stretch reads SGGKKGRVRKTKKKA.

It belongs to the eukaryotic ribosomal protein eS8 family. As to quaternary structure, part of the 30S ribosomal subunit.

The protein is Small ribosomal subunit protein eS8 of Pyrobaculum islandicum (strain DSM 4184 / JCM 9189 / GEO3).